The sequence spans 466 residues: 3-isopropylmalate dehydratase large subunit (466 aa).

Positions 347, 407, and 410 each coordinate [4Fe-4S] cluster.

Belongs to the aconitase/IPM isomerase family. LeuC type 1 subfamily. In terms of assembly, heterodimer of LeuC and LeuD. The cofactor is [4Fe-4S] cluster.

It carries out the reaction (2R,3S)-3-isopropylmalate = (2S)-2-isopropylmalate. The protein operates within amino-acid biosynthesis; L-leucine biosynthesis; L-leucine from 3-methyl-2-oxobutanoate: step 2/4. Catalyzes the isomerization between 2-isopropylmalate and 3-isopropylmalate, via the formation of 2-isopropylmaleate. The sequence is that of 3-isopropylmalate dehydratase large subunit from Klebsiella pneumoniae (strain 342).